Reading from the N-terminus, the 61-residue chain is Protein DDR2 (61 aa).

A signal peptide spans Met1–Ala22. 2 N-linked (GlcNAc...) asparagine glycosylation sites follow: Asn24 and Asn27.

The protein to yeast HOR7.

May play an important role in the response of cells to diverse environmental stresses. This Saccharomyces cerevisiae (strain ATCC 204508 / S288c) (Baker's yeast) protein is Protein DDR2 (DDR2).